The chain runs to 333 residues: MIDITLPLTDIHRHLDGNIRAQTILDLGRQFNIALPAQTLETLIPHVQVTSTEPDLVSFLTKLDWGVKVLASLDACRRVAFENIEDAARNGLHYVELRFSPGYMAMAHQLPIAGVVEAVIDGVRDGCNTFGVEARLIGIMSRTFGEAACLQELDALLAHREKITALDLAGDELGFPGSLFLSHFNRARDAGWHITVHAGEAAGPESIWQAIRELGAERIGHGVKAVEDRALMDFLAQQRIGIESCLTSNIQTSTVASLADHPLKTFLEHGVLASLNTDDPAVQGVDIIHEYHVAAPAAGLSREQIRQAQINGLEIAFLSDSEKRALREKVAAA.

2 residues coordinate Zn(2+): H12 and H14. Residues H14, D16, and G170 each coordinate substrate. H197 provides a ligand contact to Zn(2+). E200 serves as the catalytic Proton donor. D278 contributes to the Zn(2+) binding site. Position 279 (D279) interacts with substrate.

This sequence belongs to the metallo-dependent hydrolases superfamily. Adenosine and AMP deaminases family. Adenosine deaminase subfamily. The cofactor is Zn(2+).

The enzyme catalyses adenosine + H2O + H(+) = inosine + NH4(+). It carries out the reaction 2'-deoxyadenosine + H2O + H(+) = 2'-deoxyinosine + NH4(+). Its function is as follows. Catalyzes the hydrolytic deamination of adenosine and 2-deoxyadenosine. The polypeptide is Adenosine deaminase (Salmonella typhi).